The sequence spans 325 residues: Beta-lactamase 1 (325 aa).

Positions 1–26 are cleaved as a signal peptide; the sequence is MRIRPTRRLLLGAVAPLALVPLVACG. The tract at residues 30-50 is disordered; the sequence is GSESGQQPGLGGCGTSAHGSA. Residue Ser-93 is the Acyl-ester intermediate of the active site. 270 to 272 lines the substrate pocket; it reads KSG.

Belongs to the class-A beta-lactamase family.

The catalysed reaction is a beta-lactam + H2O = a substituted beta-amino acid. The chain is Beta-lactamase 1 (blaL) from Streptomyces cacaoi.